Consider the following 202-residue polypeptide: Small ribosomal subunit protein uS4c (202 aa).

An S4 RNA-binding domain is found at 90–151 (MRLDNTIFRL…KQKSRFIITK (62 aa)).

The protein belongs to the universal ribosomal protein uS4 family. Part of the 30S ribosomal subunit. Contacts protein S5. The interaction surface between S4 and S5 is involved in control of translational fidelity.

It localises to the plastid. Its subcellular location is the chloroplast. Functionally, one of the primary rRNA binding proteins, it binds directly to 16S rRNA where it nucleates assembly of the body of the 30S subunit. With S5 and S12 plays an important role in translational accuracy. This is Small ribosomal subunit protein uS4c (rps4) from Plagiochila adianthoides (Liverwort).